Consider the following 143-residue polypeptide: Large ribosomal subunit protein uL15 (143 aa).

A disordered region spans residues 1-59 (MELNTITPGQGAKHAKRRVGRGIGSGLGKTAGRGHKGQKSRSGGYHKVGFEGGQMPMQR). Residues 21-31 (RGIGSGLGKTA) are compositionally biased toward gly residues.

This sequence belongs to the universal ribosomal protein uL15 family. In terms of assembly, part of the 50S ribosomal subunit.

In terms of biological role, binds to the 23S rRNA. This chain is Large ribosomal subunit protein uL15, found in Polaromonas naphthalenivorans (strain CJ2).